We begin with the raw amino-acid sequence, 287 residues long: 2-dehydro-3-deoxyphosphooctonate aldolase (287 aa).

It belongs to the KdsA family.

It is found in the cytoplasm. It carries out the reaction D-arabinose 5-phosphate + phosphoenolpyruvate + H2O = 3-deoxy-alpha-D-manno-2-octulosonate-8-phosphate + phosphate. It participates in carbohydrate biosynthesis; 3-deoxy-D-manno-octulosonate biosynthesis; 3-deoxy-D-manno-octulosonate from D-ribulose 5-phosphate: step 2/3. It functions in the pathway bacterial outer membrane biogenesis; lipopolysaccharide biosynthesis. This chain is 2-dehydro-3-deoxyphosphooctonate aldolase, found in Bradyrhizobium sp. (strain ORS 278).